A 950-amino-acid polypeptide reads, in one-letter code: F-box only protein 10 (950 aa).

Positions 1 to 48 constitute an F-box domain; the sequence is METGGLPLELWRMILAYLHLPDLGRCSLVCRAWYELILSLDSTRWRQL. 2 PbH1 repeats span residues 198–217 and 238–260; these read SGHI…QVHG and VPLC…TVEG. The segment at 313–364 is disordered; the sequence is IEGSQSPTSPVCSSPKPGSKEAEVGSDGERVAQTPDSSDGGLSPSGEDEDDE. Over residues 315–324 the composition is skewed to polar residues; that stretch reads GSQSPTSPVC. A phosphoserine mark is found at Ser-321 and Ser-326. A compositionally biased stretch (basic and acidic residues) spans 330 to 342; the sequence is GSKEAEVGSDGER. Positions 347-357 are enriched in low complexity; the sequence is PDSSDGGLSPS. 15 PbH1 repeats span residues 423–444, 467–489, 490–512, 513–535, 536–558, 559–581, 582–604, 605–627, 628–650, 651–673, 713–735, 736–758, 760–782, 783–805, and 828–850; these read VQGC…FVCS, NSKI…FLRL, EGGG…DIRK, KSNP…VVLG, NGKG…YILY, HGNP…AVNE, NGKG…DIRR, GGVP…VVGD, EGKG…WMMS, SSLP…AVFS, ITVA…FVQS, SEAL…TIVQ, SQLT…KVEF, QCKV…ITKG, and RSDT…AVRG.

Component of the SCF(FBXO10) complex consisting of CUL1, SKP1 and FBXO10. Interacts with BCL2. Interacts with PRDM1. In terms of tissue distribution, particularly highly expressed in B-cells.

Its subcellular location is the cytoplasm. It functions in the pathway protein modification; protein ubiquitination. Its function is as follows. Substrate-recognition component of the SCF (SKP1-CUL1-F-box protein)-type E3 ubiquitin ligase complex. Mediates the ubiquitination and degradation of BCL2, an antiapoptotic protein, thereby playing a role in apoptosis by controlling the stability of BCL2. Targets also the receptor for advanced glycation end products RAGE for ubiquitination and subsequent lysosomal degradation. Directly controls HGAL/GCSAM ubiquitination and degradation and thereby decreases BCR signaling. In Mus musculus (Mouse), this protein is F-box only protein 10 (Fbxo10).